A 441-amino-acid chain; its full sequence is Serine hydroxymethyltransferase (441 aa).

Residues Leu-119 and 123–125 (GHL) each bind (6S)-5,6,7,8-tetrahydrofolate. Lys-228 is subject to N6-(pyridoxal phosphate)lysine. 370–372 (SPF) serves as a coordination point for (6S)-5,6,7,8-tetrahydrofolate.

Belongs to the SHMT family. As to quaternary structure, homodimer. It depends on pyridoxal 5'-phosphate as a cofactor.

The protein resides in the cytoplasm. The enzyme catalyses (6R)-5,10-methylene-5,6,7,8-tetrahydrofolate + glycine + H2O = (6S)-5,6,7,8-tetrahydrofolate + L-serine. Its pathway is one-carbon metabolism; tetrahydrofolate interconversion. The protein operates within amino-acid biosynthesis; glycine biosynthesis; glycine from L-serine: step 1/1. In terms of biological role, catalyzes the reversible interconversion of serine and glycine with tetrahydrofolate (THF) serving as the one-carbon carrier. This reaction serves as the major source of one-carbon groups required for the biosynthesis of purines, thymidylate, methionine, and other important biomolecules. Also exhibits THF-independent aldolase activity toward beta-hydroxyamino acids, producing glycine and aldehydes, via a retro-aldol mechanism. This chain is Serine hydroxymethyltransferase, found in Chlorobium phaeovibrioides (strain DSM 265 / 1930) (Prosthecochloris vibrioformis (strain DSM 265)).